The following is a 198-amino-acid chain: Cell division protein SepF (198 aa).

The interval 170–198 (EVPQPPARPARPASTNPPAWGNETNRMAQ) is disordered. A compositionally biased stretch (low complexity) spans 179-188 (ARPASTNPPA).

It belongs to the SepF family. In terms of assembly, homodimer. Interacts with FtsZ.

Its subcellular location is the cytoplasm. Cell division protein that is part of the divisome complex and is recruited early to the Z-ring. Probably stimulates Z-ring formation, perhaps through the cross-linking of FtsZ protofilaments. Its function overlaps with FtsA. The polypeptide is Cell division protein SepF (Trichormus variabilis (strain ATCC 29413 / PCC 7937) (Anabaena variabilis)).